Here is a 179-residue protein sequence, read N- to C-terminus: Large ribosomal subunit protein uL5 (179 aa).

It belongs to the universal ribosomal protein uL5 family. As to quaternary structure, part of the 50S ribosomal subunit; part of the 5S rRNA/L5/L18/L25 subcomplex. Contacts the 5S rRNA and the P site tRNA. Forms a bridge to the 30S subunit in the 70S ribosome.

Its function is as follows. This is one of the proteins that bind and probably mediate the attachment of the 5S RNA into the large ribosomal subunit, where it forms part of the central protuberance. In the 70S ribosome it contacts protein S13 of the 30S subunit (bridge B1b), connecting the 2 subunits; this bridge is implicated in subunit movement. Contacts the P site tRNA; the 5S rRNA and some of its associated proteins might help stabilize positioning of ribosome-bound tRNAs. The protein is Large ribosomal subunit protein uL5 of Citrifermentans bemidjiense (strain ATCC BAA-1014 / DSM 16622 / JCM 12645 / Bem) (Geobacter bemidjiensis).